A 302-amino-acid chain; its full sequence is Putative S-adenosyl-L-methionine-dependent methyltransferase MAP_1622c (302 aa).

S-adenosyl-L-methionine-binding positions include D129 and 158 to 159 (DL).

This sequence belongs to the UPF0677 family.

Exhibits S-adenosyl-L-methionine-dependent methyltransferase activity. The chain is Putative S-adenosyl-L-methionine-dependent methyltransferase MAP_1622c from Mycolicibacterium paratuberculosis (strain ATCC BAA-968 / K-10) (Mycobacterium paratuberculosis).